Reading from the N-terminus, the 434-residue chain is UDP-N-acetylglucosamine 1-carboxyvinyltransferase 1 (434 aa).

22–23 lines the phosphoenolpyruvate pocket; that stretch reads KN. R93 lines the UDP-N-acetyl-alpha-D-glucosamine pocket. The active-site Proton donor is the C117. C117 carries the post-translational modification 2-(S-cysteinyl)pyruvic acid O-phosphothioketal. Residues 122-126, D306, and V328 contribute to the UDP-N-acetyl-alpha-D-glucosamine site; that span reads RPIDQ.

Belongs to the EPSP synthase family. MurA subfamily.

The protein localises to the cytoplasm. The enzyme catalyses phosphoenolpyruvate + UDP-N-acetyl-alpha-D-glucosamine = UDP-N-acetyl-3-O-(1-carboxyvinyl)-alpha-D-glucosamine + phosphate. It functions in the pathway cell wall biogenesis; peptidoglycan biosynthesis. In terms of biological role, cell wall formation. Adds enolpyruvyl to UDP-N-acetylglucosamine. The protein is UDP-N-acetylglucosamine 1-carboxyvinyltransferase 1 of Bacillus anthracis.